The following is a 279-amino-acid chain: Probable endonuclease 4 (279 aa).

Residues His69, His109, Glu145, Asp179, His182, His216, Asp229, His231, and Glu261 each coordinate Zn(2+).

The protein belongs to the AP endonuclease 2 family. Zn(2+) serves as cofactor.

It catalyses the reaction Endonucleolytic cleavage to 5'-phosphooligonucleotide end-products.. Its function is as follows. Endonuclease IV plays a role in DNA repair. It cleaves phosphodiester bonds at apurinic or apyrimidinic (AP) sites, generating a 3'-hydroxyl group and a 5'-terminal sugar phosphate. The protein is Probable endonuclease 4 of Chlorobium luteolum (strain DSM 273 / BCRC 81028 / 2530) (Pelodictyon luteolum).